Reading from the N-terminus, the 101-residue chain is Small ribosomal subunit protein uS14 (101 aa).

Residues 48 to 69 (LSKLPRDSSPSRHRSRCELSGR) are disordered. Residues 51–68 (LPRDSSPSRHRSRCELSG) show a composition bias toward basic and acidic residues.

This sequence belongs to the universal ribosomal protein uS14 family. In terms of assembly, part of the 30S ribosomal subunit. Contacts proteins S3 and S10.

Functionally, binds 16S rRNA, required for the assembly of 30S particles and may also be responsible for determining the conformation of the 16S rRNA at the A site. This is Small ribosomal subunit protein uS14 from Stenotrophomonas maltophilia (strain R551-3).